Consider the following 157-residue polypeptide: Ribonuclease H (157 aa).

Residues 1-146 form the RNase H type-1 domain; it reads MPDLFAYTDG…ADELARAGMA (146 aa). Positions 9, 52, 74, and 138 each coordinate Mg(2+).

Belongs to the RNase H family. In terms of assembly, monomer. Mg(2+) is required as a cofactor.

The protein localises to the cytoplasm. It catalyses the reaction Endonucleolytic cleavage to 5'-phosphomonoester.. Endonuclease that specifically degrades the RNA of RNA-DNA hybrids. The sequence is that of Ribonuclease H from Ruegeria sp. (strain TM1040) (Silicibacter sp.).